Consider the following 195-residue polypeptide: UPF0157 protein BH1888 (195 aa).

Positions 1–12 (MPPMKDSSNSTP) are enriched in polar residues. The segment at 1 to 21 (MPPMKDSSNSTPRTDEELQEV) is disordered.

This sequence belongs to the UPF0157 (GrpB) family.

In Halalkalibacterium halodurans (strain ATCC BAA-125 / DSM 18197 / FERM 7344 / JCM 9153 / C-125) (Bacillus halodurans), this protein is UPF0157 protein BH1888.